The sequence spans 287 residues: rRNA adenine N-6-methyltransferase (287 aa).

Basic residues predominate over residues Met-1–Leu-13. The segment at Met-1–Phe-21 is disordered. 6 residues coordinate S-adenosyl-L-methionine: His-25, Met-27, Gly-52, Glu-73, Asp-98, and Asn-114.

Belongs to the class I-like SAM-binding methyltransferase superfamily. rRNA adenine N(6)-methyltransferase family.

In terms of biological role, involved in erythromycin resistance. In Bacillus licheniformis, this protein is rRNA adenine N-6-methyltransferase (ermD).